We begin with the raw amino-acid sequence, 609 residues long: Glutamine--fructose-6-phosphate aminotransferase [isomerizing] (609 aa).

Cys2 (nucleophile; for GATase activity) is an active-site residue. Residues 2–218 form the Glutamine amidotransferase type-2 domain; sequence CGIVGAIAQR…EGDIAEITRR (217 aa). SIS domains lie at 286 to 426 and 458 to 599; these read ADEL…LKGL and LAED…VDQP. Lys604 serves as the catalytic For Fru-6P isomerization activity.

Homodimer.

It is found in the cytoplasm. It carries out the reaction D-fructose 6-phosphate + L-glutamine = D-glucosamine 6-phosphate + L-glutamate. Functionally, catalyzes the first step in hexosamine metabolism, converting fructose-6P into glucosamine-6P using glutamine as a nitrogen source. This Escherichia coli O157:H7 protein is Glutamine--fructose-6-phosphate aminotransferase [isomerizing].